The chain runs to 276 residues: Phosphonates import ATP-binding protein PhnC (276 aa).

In terms of domain architecture, ABC transporter spans L2–D246. Residue G35 to S42 participates in ATP binding.

The protein belongs to the ABC transporter superfamily. Phosphonates importer (TC 3.A.1.9.1) family. As to quaternary structure, the complex is composed of two ATP-binding proteins (PhnC), two transmembrane proteins (PhnE) and a solute-binding protein (PhnD).

It localises to the cell inner membrane. It catalyses the reaction phosphonate(out) + ATP + H2O = phosphonate(in) + ADP + phosphate + H(+). In terms of biological role, part of the ABC transporter complex PhnCDE involved in phosphonates import. Responsible for energy coupling to the transport system. The chain is Phosphonates import ATP-binding protein PhnC from Alcaligenes faecalis.